We begin with the raw amino-acid sequence, 290 residues long: Diaminopimelate epimerase (290 aa).

Residues N17, Q49, and N69 each coordinate substrate. Residue C78 is the Proton donor of the active site. Substrate contacts are provided by residues 79–80 (GN), N165, N198, and 216–217 (ER). C225 acts as the Proton acceptor in catalysis. Position 226–227 (226–227 (GS)) interacts with substrate.

This sequence belongs to the diaminopimelate epimerase family. Homodimer.

Its subcellular location is the cytoplasm. The catalysed reaction is (2S,6S)-2,6-diaminopimelate = meso-2,6-diaminopimelate. It functions in the pathway amino-acid biosynthesis; L-lysine biosynthesis via DAP pathway; DL-2,6-diaminopimelate from LL-2,6-diaminopimelate: step 1/1. Catalyzes the stereoinversion of LL-2,6-diaminopimelate (L,L-DAP) to meso-diaminopimelate (meso-DAP), a precursor of L-lysine and an essential component of the bacterial peptidoglycan. The sequence is that of Diaminopimelate epimerase from Methylocella silvestris (strain DSM 15510 / CIP 108128 / LMG 27833 / NCIMB 13906 / BL2).